The following is a 270-amino-acid chain: Glutamate racemase (270 aa).

Residues 10–11 and 42–43 contribute to the substrate site; these read DS and YG. Cys73 functions as the Proton donor/acceptor in the catalytic mechanism. Residue 74–75 participates in substrate binding; sequence NT. Catalysis depends on Cys184, which acts as the Proton donor/acceptor. Residue 185 to 186 participates in substrate binding; the sequence is TH.

Belongs to the aspartate/glutamate racemases family.

The catalysed reaction is L-glutamate = D-glutamate. The protein operates within cell wall biogenesis; peptidoglycan biosynthesis. Functionally, provides the (R)-glutamate required for cell wall biosynthesis. The protein is Glutamate racemase of Geobacter metallireducens (strain ATCC 53774 / DSM 7210 / GS-15).